The following is a 959-amino-acid chain: Transcription factor 1 (959 aa).

2 consecutive C2H2-type zinc fingers follow at residues 2–24 and 30–52; these read VFCT…ILTH and FKCF…YTVH. Residues 79–105 constitute a DNA-binding region (zn(2)-C6 fungal-type); the sequence is CSNCAKTKTKCDKKFPCSRCASRNLRC. A disordered region spans residues 154–226; the sequence is PTGHVEESSK…SFPGFDDYNQ (73 aa). Positions 163–178 are enriched in low complexity; it reads KSSSPSGSPTSISHNS.

Its subcellular location is the nucleus. Functionally, elsinochromes biosynthesis cluster-specific transcription factor that positively regulates the expression of cluster genes including RDT1, PKS1, PRF1 and HP1, and subsequent elsinochromes production. The chain is Transcription factor 1 from Elsinoe fawcettii (Citrus scab fungus).